We begin with the raw amino-acid sequence, 51 residues long: Probable antitoxin PhoAT (51 aa).

This sequence belongs to the PhoAT antitoxin family. As to quaternary structure, interacts with toxin PhoH2.

Its function is as follows. Antitoxin component of a type II toxin-antitoxin (TA) system. The cognate antitoxin is PhoAT; the toxin gene cannot be expressed in the absence of the antitoxin gene in M.smegmatis (strain mc(2)4517), and abrogates the toxic effects of PhoH2 in M.smegmatis strain mc(2)155. In Mycobacterium tuberculosis (strain ATCC 25618 / H37Rv), this protein is Probable antitoxin PhoAT.